The sequence spans 178 residues: Ribosome maturation factor RimM (178 aa).

The PRC barrel domain occupies 99–178; sequence QGEFYWRDLI…EITVDWDPGF (80 aa).

It belongs to the RimM family. In terms of assembly, binds ribosomal protein uS19.

It localises to the cytoplasm. In terms of biological role, an accessory protein needed during the final step in the assembly of 30S ribosomal subunit, possibly for assembly of the head region. Essential for efficient processing of 16S rRNA. May be needed both before and after RbfA during the maturation of 16S rRNA. It has affinity for free ribosomal 30S subunits but not for 70S ribosomes. The polypeptide is Ribosome maturation factor RimM (Pseudoalteromonas translucida (strain TAC 125)).